Here is a 117-residue protein sequence, read N- to C-terminus: Large ribosomal subunit protein bL20 (117 aa).

Belongs to the bacterial ribosomal protein bL20 family.

Functionally, binds directly to 23S ribosomal RNA and is necessary for the in vitro assembly process of the 50S ribosomal subunit. It is not involved in the protein synthesizing functions of that subunit. The polypeptide is Large ribosomal subunit protein bL20 (Pasteurella multocida (strain Pm70)).